The primary structure comprises 309 residues: Mannitol-1-phosphatase (309 aa).

H82 serves as the catalytic Tele-phosphohistidine intermediate. E166 acts as the Proton donor/acceptor in catalysis.

Belongs to the phosphoglycerate mutase family.

The catalysed reaction is D-mannitol 1-phosphate + H2O = D-mannitol + phosphate. With respect to regulation, by diethyl pyrocarbonate (DEPC). Key enzyme for mannitol biosynthesis. This chain is Mannitol-1-phosphatase, found in Eimeria tenella (Coccidian parasite).